Here is a 328-residue protein sequence, read N- to C-terminus: MLNEFPIFDYEDIQLIPNKCVIKSRAEADTSVTLGNHTFKLPVVPANMQTILDENVAEQLAKGGYFYIMHRFDEAGRIPFIKRMHNQGLIASISVGVKDYEYDFVRQLKTDAPEYITIDIAHGHADSVISMIQHIKKELPDTFVIAGNVGTPEAVRELENAGADATKVGIGPGKVCITKVKTGFGTGGWQLAALRWCAKAARKPIIADGGIRTHGDIAKSIRFGASMIMIGSLFAGHIESPGKTIEVDGEQFKEYYGSASQYQKGAYKNVEGKRILLPAKGHLQDTLTEMEQDLQSAISYAGGRQVADLKHVDYVIVKNSIWNGDASH.

Cys176 functions as the Thioimidate intermediate in the catalytic mechanism. Ile205–Ile228 contacts NADP(+).

Belongs to the IMPDH/GMPR family. GuaC type 2 subfamily.

It catalyses the reaction IMP + NH4(+) + NADP(+) = GMP + NADPH + 2 H(+). Its function is as follows. Catalyzes the irreversible NADPH-dependent deamination of GMP to IMP. It functions in the conversion of nucleobase, nucleoside and nucleotide derivatives of G to A nucleotides, and in maintaining the intracellular balance of A and G nucleotides. The polypeptide is GMP reductase (Streptococcus pneumoniae (strain ATCC 700669 / Spain 23F-1)).